The chain runs to 540 residues: Ribonuclease Y (540 aa).

Residues 4–24 traverse the membrane as a helical segment; that stretch reads TILVPVAVAIVSVLVGGCAGY. A KH domain is found at 230–293; it reads TVSVVNLPSD…EIAKRALERL (64 aa). The HD domain maps to 356–449; sequence VLSHSIEVGK…VVAADTISSA (94 aa).

It belongs to the RNase Y family.

The protein resides in the cell membrane. Endoribonuclease that initiates mRNA decay. The chain is Ribonuclease Y from Lactobacillus johnsonii (strain CNCM I-12250 / La1 / NCC 533).